Reading from the N-terminus, the 219-residue chain is uncharacterized protein (219 aa).

Positions 30 to 107 constitute an RRM domain; the sequence is FRLFVGNLGN…RPVKLSRATS (78 aa). Residues 140-149 are compositionally biased toward basic residues; that stretch reads KKIKNKHGKN. The interval 140-219 is disordered; that stretch reads KKIKNKHGKN…YSRASSFRRV (80 aa). Residues 150-169 show a composition bias toward low complexity; it reads SSKSSRAAQSAAAELISSSS. Residues 176–186 are compositionally biased toward polar residues; sequence ANSTSVPNAVN.

This is an uncharacterized protein from Schizosaccharomyces pombe (strain 972 / ATCC 24843) (Fission yeast).